The sequence spans 257 residues: Aspartate/glutamate leucyltransferase (257 aa).

This sequence belongs to the R-transferase family. Bpt subfamily.

Its subcellular location is the cytoplasm. It catalyses the reaction N-terminal L-glutamyl-[protein] + L-leucyl-tRNA(Leu) = N-terminal L-leucyl-L-glutamyl-[protein] + tRNA(Leu) + H(+). It carries out the reaction N-terminal L-aspartyl-[protein] + L-leucyl-tRNA(Leu) = N-terminal L-leucyl-L-aspartyl-[protein] + tRNA(Leu) + H(+). In terms of biological role, functions in the N-end rule pathway of protein degradation where it conjugates Leu from its aminoacyl-tRNA to the N-termini of proteins containing an N-terminal aspartate or glutamate. The protein is Aspartate/glutamate leucyltransferase of Nitrobacter hamburgensis (strain DSM 10229 / NCIMB 13809 / X14).